A 105-amino-acid polypeptide reads, in one-letter code: MATIQQQKIRIRLKAFDRRLLDTSCEKIVDTANRTGATAIGPIPLPTKRRIYCLLRSPHVDKDSREHFETRTHRRIVDIYQPSSKTIDALMKLDLPAGVDIEVKL.

This sequence belongs to the universal ribosomal protein uS10 family. As to quaternary structure, part of the 30S ribosomal subunit.

Functionally, involved in the binding of tRNA to the ribosomes. The sequence is that of Small ribosomal subunit protein uS10 from Trichodesmium erythraeum (strain IMS101).